Consider the following 508-residue polypeptide: Methionine--tRNA ligase (508 aa).

A 'HIGH' region motif is present at residues 12–22 (YYVNDIPHIGH). The 'KMSKS' region motif lies at 295-299 (KISKS). An ATP-binding site is contributed by K298.

The protein belongs to the class-I aminoacyl-tRNA synthetase family. MetG type 2B subfamily. As to quaternary structure, monomer.

The protein localises to the cytoplasm. It carries out the reaction tRNA(Met) + L-methionine + ATP = L-methionyl-tRNA(Met) + AMP + diphosphate. Is required not only for elongation of protein synthesis but also for the initiation of all mRNA translation through initiator tRNA(fMet) aminoacylation. This chain is Methionine--tRNA ligase, found in Rickettsia conorii (strain ATCC VR-613 / Malish 7).